Reading from the N-terminus, the 204-residue chain is Methylthioribulose-1-phosphate dehydratase (204 aa).

The Zn(2+) site is built by H94 and H96.

It belongs to the aldolase class II family. MtnB subfamily. The cofactor is Zn(2+).

It carries out the reaction 5-(methylsulfanyl)-D-ribulose 1-phosphate = 5-methylsulfanyl-2,3-dioxopentyl phosphate + H2O. It functions in the pathway amino-acid biosynthesis; L-methionine biosynthesis via salvage pathway; L-methionine from S-methyl-5-thio-alpha-D-ribose 1-phosphate: step 2/6. Functionally, catalyzes the dehydration of methylthioribulose-1-phosphate (MTRu-1-P) into 2,3-diketo-5-methylthiopentyl-1-phosphate (DK-MTP-1-P). This Serratia proteamaculans (strain 568) protein is Methylthioribulose-1-phosphate dehydratase.